The following is a 543-amino-acid chain: Putative cysteine ligase BshC (543 aa).

Residues 419–440 adopt a coiled-coil conformation; the sequence is DEKNNDNIDEVVEEVKAQISDI.

This sequence belongs to the BshC family.

Involved in bacillithiol (BSH) biosynthesis. May catalyze the last step of the pathway, the addition of cysteine to glucosamine malate (GlcN-Mal) to generate BSH. In Oceanobacillus iheyensis (strain DSM 14371 / CIP 107618 / JCM 11309 / KCTC 3954 / HTE831), this protein is Putative cysteine ligase BshC.